Consider the following 565-residue polypeptide: Liver carboxylesterase 1 (565 aa).

The N-terminal stretch at 1–18 is a signal peptide; it reads MWLCALALASLAACTAWG. The N-linked (GlcNAc...) asparagine glycan is linked to N79. A disulfide bridge links C87 with C116. S221 acts as the Acyl-ester intermediate in catalysis. Cysteines 273 and 284 form a disulfide. E353 (charge relay system) is an active-site residue. N389 carries an N-linked (GlcNAc...) asparagine glycan. H467 acts as the Charge relay system in catalysis. Residue L565 is a short sequence motif, prevents secretion from ER.

The protein belongs to the type-B carboxylesterase/lipase family. As to quaternary structure, monomer.

The protein localises to the endoplasmic reticulum lumen. It catalyses the reaction a carboxylic ester + H2O = an alcohol + a carboxylate + H(+). Functionally, involved in the detoxification of xenobiotics and in the activation of ester and amide prodrugs. The protein is Liver carboxylesterase 1 of Oryctolagus cuniculus (Rabbit).